The chain runs to 444 residues: Serine--tRNA ligase (444 aa).

An L-serine-binding site is contributed by 249-251 (TAE). ATP-binding positions include 280 to 282 (RRE) and valine 296. Glutamate 303 provides a ligand contact to L-serine. Residue 367–370 (EIVS) coordinates ATP. Residue threonine 401 participates in L-serine binding.

This sequence belongs to the class-II aminoacyl-tRNA synthetase family. Type-1 seryl-tRNA synthetase subfamily. Homodimer. The tRNA molecule binds across the dimer.

It localises to the cytoplasm. The enzyme catalyses tRNA(Ser) + L-serine + ATP = L-seryl-tRNA(Ser) + AMP + diphosphate + H(+). The catalysed reaction is tRNA(Sec) + L-serine + ATP = L-seryl-tRNA(Sec) + AMP + diphosphate + H(+). The protein operates within aminoacyl-tRNA biosynthesis; selenocysteinyl-tRNA(Sec) biosynthesis; L-seryl-tRNA(Sec) from L-serine and tRNA(Sec): step 1/1. In terms of biological role, catalyzes the attachment of serine to tRNA(Ser). Is also able to aminoacylate tRNA(Sec) with serine, to form the misacylated tRNA L-seryl-tRNA(Sec), which will be further converted into selenocysteinyl-tRNA(Sec). This is Serine--tRNA ligase from Picrophilus torridus (strain ATCC 700027 / DSM 9790 / JCM 10055 / NBRC 100828 / KAW 2/3).